A 373-amino-acid polypeptide reads, in one-letter code: MEKRRGPPPCQSGSGCSNPAKIRKAKDGAQLCGPCFSRNFEDDVHEAIVNNKLFKRGERVAIGASGGKDSTVLAYVMKTLNDRHDYGLDLQLLSIDEGIKGYRDDSLLAVEKNRVEYGLPLTILSYRDLYGWTMDDIVAKIGKKNNCTFCGVFRRQALDRGAFKIGATKLVTGHNADDMAETLLMNVLRGDIARLERCTNIVTGEEGDLPRAKPLKYCFERDIVMYARTNQLEYFYTECIYAPNAYRGYARKYVRDLEKVHPRAILDLIRSGEKVSVKKEVEMPTLKICERCGYMTSQKLCKACLLIEGLNTGNTDLGVRKSKKSKKVTVEADELNKEGGCGSGGGGGGCGCAGAEDAAENEETRQRLKDLQF.

Belongs to the TtcA family. CTU1/NCS6/ATPBD3 subfamily.

Its subcellular location is the cytoplasm. Its pathway is tRNA modification; 5-methoxycarbonylmethyl-2-thiouridine-tRNA biosynthesis. Its function is as follows. Plays a central role in 2-thiolation of mcm(5)S(2)U at tRNA wobble positions of tRNA(Lys), tRNA(Glu) and tRNA(Gln). Directly binds tRNAs and probably acts by catalyzing adenylation of tRNAs, an intermediate required for 2-thiolation. It is unclear whether it acts as a sulfurtransferase that transfers sulfur from thiocarboxylated URM1 onto the uridine of tRNAs at wobble position. The chain is Cytoplasmic tRNA 2-thiolation protein 1 from Caenorhabditis elegans.